The following is a 278-amino-acid chain: Pantothenate synthetase (278 aa).

Residue 27–34 (MGYLHEGH) coordinates ATP. His34 acts as the Proton donor in catalysis. Residue Gln58 coordinates (R)-pantoate. A beta-alanine-binding site is contributed by Gln58. 144-147 (GQKD) contributes to the ATP binding site. (R)-pantoate is bound at residue Gln150. Residues Val173 and 181-184 (MSSR) each bind ATP.

The protein belongs to the pantothenate synthetase family. Homodimer.

The protein resides in the cytoplasm. The catalysed reaction is (R)-pantoate + beta-alanine + ATP = (R)-pantothenate + AMP + diphosphate + H(+). Its pathway is cofactor biosynthesis; (R)-pantothenate biosynthesis; (R)-pantothenate from (R)-pantoate and beta-alanine: step 1/1. Its function is as follows. Catalyzes the condensation of pantoate with beta-alanine in an ATP-dependent reaction via a pantoyl-adenylate intermediate. In Roseiflexus sp. (strain RS-1), this protein is Pantothenate synthetase.